A 94-amino-acid polypeptide reads, in one-letter code: Small ribosomal subunit protein uS19 (94 aa).

The protein belongs to the universal ribosomal protein uS19 family.

In terms of biological role, protein S19 forms a complex with S13 that binds strongly to the 16S ribosomal RNA. This chain is Small ribosomal subunit protein uS19, found in Anaplasma phagocytophilum (strain HZ).